The sequence spans 172 residues: NADH-quinone oxidoreductase subunit B (172 aa).

The [4Fe-4S] cluster site is built by cysteine 46, cysteine 47, cysteine 111, and cysteine 141.

This sequence belongs to the complex I 20 kDa subunit family. NDH-1 is composed of 14 different subunits. Subunits NuoB, C, D, E, F, and G constitute the peripheral sector of the complex. [4Fe-4S] cluster serves as cofactor.

The protein resides in the cell membrane. It carries out the reaction a quinone + NADH + 5 H(+)(in) = a quinol + NAD(+) + 4 H(+)(out). In terms of biological role, NDH-1 shuttles electrons from NADH, via FMN and iron-sulfur (Fe-S) centers, to quinones in the respiratory chain. The immediate electron acceptor for the enzyme in this species is believed to be a menaquinone. Couples the redox reaction to proton translocation (for every two electrons transferred, four hydrogen ions are translocated across the cytoplasmic membrane), and thus conserves the redox energy in a proton gradient. This Bacillus anthracis (strain A0248) protein is NADH-quinone oxidoreductase subunit B.